An 83-amino-acid polypeptide reads, in one-letter code: uncharacterized protein (83 aa).

It belongs to the UPF0440 family.

This is an uncharacterized protein from Natronomonas pharaonis (strain ATCC 35678 / DSM 2160 / CIP 103997 / JCM 8858 / NBRC 14720 / NCIMB 2260 / Gabara) (Halobacterium pharaonis).